Here is a 427-residue protein sequence, read N- to C-terminus: Acyl-CoA hydrolase 2 (427 aa).

15 to 83 serves as a coordination point for a nucleoside 3',5'-cyclic phosphate; the sequence is LLQKLPSSSL…FLLKQYDYFG (69 aa). Active-site charge relay system residues include Asp-337, Ser-359, and Gln-409. The Microbody targeting signal motif lies at 425 to 427; sequence SKL.

The protein belongs to the C/M/P thioester hydrolase family. Homotetramer. Mostly expressed in leaves and flowers, and, to a lower extent, in seedlings and siliques.

It is found in the peroxisome matrix. The catalysed reaction is a fatty acyl-CoA + H2O = a fatty acid + CoA + H(+). It carries out the reaction dodecanoyl-CoA + H2O = dodecanoate + CoA + H(+). It catalyses the reaction tetradecanoyl-CoA + H2O = tetradecanoate + CoA + H(+). The enzyme catalyses octadecanoyl-CoA + H2O = octadecanoate + CoA + H(+). The catalysed reaction is (9Z)-hexadecenoyl-CoA + H2O = (9Z)-hexadecenoate + CoA + H(+). It carries out the reaction (5Z,8Z,11Z,14Z)-eicosatetraenoyl-CoA + H2O = (5Z,8Z,11Z,14Z)-eicosatetraenoate + CoA + H(+). It catalyses the reaction hexadecanoyl-CoA + H2O = hexadecanoate + CoA + H(+). The enzyme catalyses (9Z)-octadecenoyl-CoA + H2O = (9Z)-octadecenoate + CoA + H(+). The catalysed reaction is (9Z,12Z)-octadecadienoyl-CoA + H2O = (9Z,12Z)-octadecadienoate + CoA + H(+). The protein operates within lipid metabolism; fatty acid metabolism. Insensitive to feedback inhibition by free coenzyme A (CoASH). Functionally, catalyzes the hydrolysis of acyl-CoAs into free fatty acids and coenzyme A (CoASH), regulating their respective intracellular levels. Active with both medium chain and long chain acyl-CoAs (e.g. 12:0-CoA, 14:0-CoA, 16:0-CoA, 18:0-CoA, 16:1-CoA, 18:1-CoA, 18:2-CoA and 20:4-CoA) as substrates, palmitoleoyl-CoA (16:1-CoA) being the favorite substrate. The polypeptide is Acyl-CoA hydrolase 2 (Arabidopsis thaliana (Mouse-ear cress)).